Here is a 258-residue protein sequence, read N- to C-terminus: Regulatory protein RecX (258 aa).

This sequence belongs to the RecX family.

It is found in the cytoplasm. Its function is as follows. Modulates RecA activity. The protein is Regulatory protein RecX of Streptococcus thermophilus (strain ATCC BAA-491 / LMD-9).